Here is a 240-residue protein sequence, read N- to C-terminus: Uridylate kinase (240 aa).

13-16 (KASG) contacts ATP. Residues 21–26 (GGQGFG) form an involved in allosteric activation by GTP region. G55 is a binding site for UMP. ATP is bound by residues G56 and R60. Residues D75 and 136–143 (TGNPFFTT) each bind UMP. ATP contacts are provided by T163, Q164, Y169, and D172.

It belongs to the UMP kinase family. In terms of assembly, homohexamer.

The protein resides in the cytoplasm. The enzyme catalyses UMP + ATP = UDP + ADP. The protein operates within pyrimidine metabolism; CTP biosynthesis via de novo pathway; UDP from UMP (UMPK route): step 1/1. With respect to regulation, allosterically activated by GTP. Inhibited by UTP. Its function is as follows. Catalyzes the reversible phosphorylation of UMP to UDP. In Rhizobium johnstonii (strain DSM 114642 / LMG 32736 / 3841) (Rhizobium leguminosarum bv. viciae), this protein is Uridylate kinase.